Reading from the N-terminus, the 425-residue chain is UPF0597 protein VP2173 (425 aa).

The protein belongs to the UPF0597 family.

The chain is UPF0597 protein VP2173 from Vibrio parahaemolyticus serotype O3:K6 (strain RIMD 2210633).